A 279-amino-acid chain; its full sequence is Proline-rich protein 23D1 (279 aa).

2 disordered regions span residues Met-1–Asn-60 and Leu-247–Ser-270. Polar residues predominate over residues Thr-15–Asn-33.

This sequence belongs to the PRR23 family.

The protein is Proline-rich protein 23D1 (PRR23D1) of Homo sapiens (Human).